A 456-amino-acid polypeptide reads, in one-letter code: Alcohol acyltransferase 17 (456 aa).

Residues His166 and Asp382 each act as proton acceptor in the active site.

The protein belongs to the plant acyltransferase family. Expressed in fruit.

In terms of biological role, involved in the biosynthesis of volatile esters which confer kiwifruit flavor. Alcohol acyl transferase that can use a wide range of alcohols as substrate to produce esters. The protein is Alcohol acyltransferase 17 of Actinidia deliciosa (Kiwi).